We begin with the raw amino-acid sequence, 350 residues long: 2-oxoglutarate and iron-dependent oxygenase domain-containing protein 2 (350 aa).

Residues 215–309 (DSHRAFVVKY…RWNLVVWLRA (95 aa)) form the Fe2OG dioxygenase domain. Residues His235, Asp237, and His290 each contribute to the Fe cation site. Arg300 lines the 2-oxoglutarate pocket.

The protein belongs to the OGFOD2 family. Requires Fe(2+) as cofactor. L-ascorbate is required as a cofactor.

This Homo sapiens (Human) protein is 2-oxoglutarate and iron-dependent oxygenase domain-containing protein 2 (OGFOD2).